The chain runs to 424 residues: Serine--tRNA ligase (424 aa).

230–232 (TAE) contacts L-serine. ATP is bound at residue 261–263 (RAE). E284 serves as a coordination point for L-serine. 348–351 (EISS) lines the ATP pocket. S384 is an L-serine binding site.

Belongs to the class-II aminoacyl-tRNA synthetase family. Type-1 seryl-tRNA synthetase subfamily. Homodimer. The tRNA molecule binds across the dimer.

The protein localises to the cytoplasm. The enzyme catalyses tRNA(Ser) + L-serine + ATP = L-seryl-tRNA(Ser) + AMP + diphosphate + H(+). It catalyses the reaction tRNA(Sec) + L-serine + ATP = L-seryl-tRNA(Sec) + AMP + diphosphate + H(+). Its pathway is aminoacyl-tRNA biosynthesis; selenocysteinyl-tRNA(Sec) biosynthesis; L-seryl-tRNA(Sec) from L-serine and tRNA(Sec): step 1/1. Its function is as follows. Catalyzes the attachment of serine to tRNA(Ser). Is also able to aminoacylate tRNA(Sec) with serine, to form the misacylated tRNA L-seryl-tRNA(Sec), which will be further converted into selenocysteinyl-tRNA(Sec). The protein is Serine--tRNA ligase of Carboxydothermus hydrogenoformans (strain ATCC BAA-161 / DSM 6008 / Z-2901).